The following is a 318-amino-acid chain: D-alanine--D-alanine ligase (318 aa).

The region spanning 116-311 is the ATP-grasp domain; that stretch reads KQVWQSLGIP…FQQLVLAILA (196 aa). 142–197 serves as a coordination point for ATP; it reads STELGFPLIVKPAHEGSSIGMAKVNSAQELVAAWQDAAKYDSQVLVEQWIHGPEFT. Mg(2+) contacts are provided by Asp-265, Glu-278, and Asn-280.

Belongs to the D-alanine--D-alanine ligase family. The cofactor is Mg(2+). Mn(2+) serves as cofactor.

The protein resides in the cytoplasm. The catalysed reaction is 2 D-alanine + ATP = D-alanyl-D-alanine + ADP + phosphate + H(+). It participates in cell wall biogenesis; peptidoglycan biosynthesis. Its function is as follows. Cell wall formation. The chain is D-alanine--D-alanine ligase from Pseudomonas putida (strain GB-1).